The primary structure comprises 132 residues: Sirohydrochlorin cobaltochelatase (132 aa).

The active-site Proton acceptor is His10. His10 is a Co(2+) binding site. Substrate contacts are provided by residues Arg46 and 69-74 (ISYGLH). His74 is a binding site for Co(2+).

The protein belongs to the CbiX family. CbiXS subfamily. In terms of assembly, homotetramer; dimer of dimers.

It carries out the reaction Co-sirohydrochlorin + 2 H(+) = sirohydrochlorin + Co(2+). The protein operates within cofactor biosynthesis; adenosylcobalamin biosynthesis; cob(II)yrinate a,c-diamide from sirohydrochlorin (anaerobic route): step 1/10. Functionally, catalyzes the insertion of Co(2+) into sirohydrochlorin as part of the anaerobic pathway to cobalamin biosynthesis. The protein is Sirohydrochlorin cobaltochelatase of Archaeoglobus fulgidus (strain ATCC 49558 / DSM 4304 / JCM 9628 / NBRC 100126 / VC-16).